A 65-amino-acid polypeptide reads, in one-letter code: MQVIEAIYEDGVLKPLKKLKLKEHSKVIIKIIDEEELEKILDSMVIEKVEGIDYKKLKEAYYESL.

Belongs to the UPF0165 family.

Functionally, possibly the antitoxin component of a type II toxin-antitoxin (TA) system. In Pyrococcus furiosus (strain ATCC 43587 / DSM 3638 / JCM 8422 / Vc1), this protein is Putative antitoxin PF2058.